The sequence spans 1071 residues: ATP-dependent helicase/deoxyribonuclease subunit B (1071 aa).

This sequence belongs to the helicase family. AddB/RexB type 2 subfamily. Heterodimer of AddA and RexB. It depends on Mg(2+) as a cofactor.

In terms of biological role, the heterodimer acts as both an ATP-dependent DNA helicase and an ATP-dependent, dual-direction single-stranded exonuclease. Recognizes the chi site generating a DNA molecule suitable for the initiation of homologous recombination. This subunit has 5' -&gt; 3' nuclease activity but not helicase activity. The polypeptide is ATP-dependent helicase/deoxyribonuclease subunit B (Streptococcus pyogenes serotype M12 (strain MGAS2096)).